Here is a 465-residue protein sequence, read N- to C-terminus: Cysteine--tRNA ligase (465 aa).

Position 27 (C27) interacts with Zn(2+). A 'HIGH' region motif is present at residues 29–39 (PTVYDDAHLGH). The interval 153–173 (DISHKVSDDDTQSRVEHNSEK) is disordered. C208, H237, and E241 together coordinate Zn(2+). A 'KMSKS' region motif is present at residues 269 to 273 (KMSKS). K272 lines the ATP pocket.

The protein belongs to the class-I aminoacyl-tRNA synthetase family. Monomer. Requires Zn(2+) as cofactor.

It is found in the cytoplasm. It catalyses the reaction tRNA(Cys) + L-cysteine + ATP = L-cysteinyl-tRNA(Cys) + AMP + diphosphate. The protein is Cysteine--tRNA ligase of Sulfurovum sp. (strain NBC37-1).